The primary structure comprises 535 residues: 3-hydroxyindolin-2-one monooxygenase (535 aa).

A run of 2 helical transmembrane segments spans residues 14–34 and 469–489; these read VVQCTPTQAAAVLGVLLLLAI and ICAGATFAIATVEIMLANLIY. Cys470 is a binding site for heme.

It belongs to the cytochrome P450 family. The cofactor is heme.

It localises to the membrane. The enzyme catalyses 3-hydroxyindolin-2-one + reduced [NADPH--hemoprotein reductase] + O2 = 2-hydroxy-2H-1,4-benzoxazin-3(4H)-one + oxidized [NADPH--hemoprotein reductase] + H2O + H(+). It participates in secondary metabolite biosynthesis; 2,4-dihydroxy-1,4-benzoxazin-3-one biosynthesis; 2,4-dihydroxy-1,4-benzoxazin-3-one from indoleglycerol phosphate: step 4/5. Its function is as follows. Catalyzes the conversion of 3-hydroxyindolin-2-one to 2-hydroxy-1,4-benzoxazin-3-one (HBOA). The polypeptide is 3-hydroxyindolin-2-one monooxygenase (CYP71C1) (Zea mays (Maize)).